The sequence spans 1325 residues: uncharacterized protein (1325 aa).

The N-terminal stretch at 1–18 is a signal peptide; sequence MNRIYRVIWNCTLQVFQA. Cysteine 19 carries N-palmitoyl cysteine lipidation. Cysteine 19 carries the S-diacylglycerol cysteine lipid modification.

To E.coli YfaL.

The protein resides in the cell membrane. This is an uncharacterized protein from Escherichia coli (strain K12).